A 435-amino-acid chain; its full sequence is Cyclic 2,3-diphosphoglycerate synthetase (435 aa).

The protein belongs to the cyclic 2,3-diphosphoglycerate synthetase family.

It is found in the cytoplasm. It catalyses the reaction (2R)-2,3-bisphosphoglycerate + ATP + H(+) = cyclic (2R)-2,3-bisphosphoglycerate + ADP + phosphate. In terms of biological role, catalyzes the formation of cyclic 2,3-diphosphoglycerate (cDPG) by formation of an intramolecular phosphoanhydride bond at the expense of ATP. This is Cyclic 2,3-diphosphoglycerate synthetase from Pyrococcus horikoshii (strain ATCC 700860 / DSM 12428 / JCM 9974 / NBRC 100139 / OT-3).